Reading from the N-terminus, the 92-residue chain is Small ribosomal subunit protein uS19 (92 aa).

The protein belongs to the universal ribosomal protein uS19 family.

Protein S19 forms a complex with S13 that binds strongly to the 16S ribosomal RNA. The polypeptide is Small ribosomal subunit protein uS19 (Corynebacterium kroppenstedtii (strain DSM 44385 / JCM 11950 / CIP 105744 / CCUG 35717)).